Consider the following 547-residue polypeptide: Chaperonin GroEL (547 aa).

Residues 30-33 (TLGP), lysine 51, 87-91 (DGTTT), glycine 415, 479-481 (NAA), and aspartate 495 contribute to the ATP site. The disordered stretch occupies residues 526–547 (KKDEPTPPAAGGGMGGMGGMDF). The segment covering 535 to 547 (AGGGMGGMGGMDF) has biased composition (gly residues).

This sequence belongs to the chaperonin (HSP60) family. Forms a cylinder of 14 subunits composed of two heptameric rings stacked back-to-back. Interacts with the co-chaperonin GroES.

The protein resides in the cytoplasm. It carries out the reaction ATP + H2O + a folded polypeptide = ADP + phosphate + an unfolded polypeptide.. In terms of biological role, together with its co-chaperonin GroES, plays an essential role in assisting protein folding. The GroEL-GroES system forms a nano-cage that allows encapsulation of the non-native substrate proteins and provides a physical environment optimized to promote and accelerate protein folding. This chain is Chaperonin GroEL, found in Xylella fastidiosa (strain M12).